The following is a 200-amino-acid chain: Probable DNA-directed RNA polymerase subunit delta (200 aa).

Residues 19 to 88 (LSMIEVARAI…GDNKWGLRSW (70 aa)) enclose the HTH HARE-type domain. Composition is skewed to acidic residues over residues 125 to 143 (DSDAIDYNADDPEDEDAYE) and 150 to 200 (YDDE…TSEE). A disordered region spans residues 125 to 200 (DSDAIDYNAD…SDDDAETSEE (76 aa)).

Belongs to the RpoE family. As to quaternary structure, RNAP is composed of a core of 2 alpha, a beta and a beta' subunits. The core is associated with a delta subunit and one of several sigma factors.

Participates in both the initiation and recycling phases of transcription. In the presence of the delta subunit, RNAP displays an increased specificity of transcription, a decreased affinity for nucleic acids, and an increased efficiency of RNA synthesis because of enhanced recycling. This chain is Probable DNA-directed RNA polymerase subunit delta, found in Streptococcus pneumoniae serotype 4 (strain ATCC BAA-334 / TIGR4).